Here is a 326-residue protein sequence, read N- to C-terminus: Vitamin B12 import system permease protein BtuC (326 aa).

9 helical membrane-spanning segments follow: residues 15 to 35, 61 to 81, 88 to 108, 112 to 132, 146 to 166, 184 to 204, 240 to 260, 274 to 294, and 302 to 322; these read WLLC…CAGE, LAVL…QALF, PGLL…VLLG, LPNW…TLIL, LLAG…AIYF, GGVD…LLWI, GWMV…GLVI, VLLP…DVVA, and ELPI…WLLL.

Belongs to the binding-protein-dependent transport system permease family. FecCD subfamily. As to quaternary structure, the complex is composed of two ATP-binding proteins (BtuD), two transmembrane proteins (BtuC) and a solute-binding protein (BtuF).

The protein localises to the cell inner membrane. Its function is as follows. Part of the ABC transporter complex BtuCDF involved in vitamin B12 import. Involved in the translocation of the substrate across the membrane. This Escherichia coli O8 (strain IAI1) protein is Vitamin B12 import system permease protein BtuC.